Reading from the N-terminus, the 271-residue chain is Na(+), Li(+), K(+)/H(+) antiporter subunit B (271 aa).

7 helical membrane-spanning segments follow: residues 2 to 22 (ILLT…AIIF), 36 to 56 (LPQV…FLVG), 94 to 114 (WVYL…PSLI), 130 to 150 (PFML…LGTW), 152 to 172 (IVMG…VIIQ), 193 to 213 (STIT…SIPG), and 216 to 236 (ALMD…ITVM). Positions 252–271 (TPHLSYSKAPPPSKGDNNAL) are disordered.

It belongs to the UmpA/UmpB family. Heterodimer composed of UmpA and UmpB.

The protein localises to the cell membrane. In terms of biological role, part of a two-component antiporter that catalyzes the efflux of Na(+), Li(+) and K(+) in exchange for external protons. Shows a preference for Na(+), followed by K(+) and Li(+). This Vreelandella zhaodongensis (Halomonas zhaodongensis) protein is Na(+), Li(+), K(+)/H(+) antiporter subunit B.